The chain runs to 354 residues: MRFDLEPPSSVAAAHRIGVLLINLGTPDAPTPRAVRRYLAEFLSDPRVVEIPQAVWQVLLRTLILPLRGRASAKKYAAVWMPEGSPLRVYTERQTDSVRHLLTSNGYHVMVDYAMRYGSPNISHALTQFKRAGVERVLLMPMYPQYSASTTATAFDAAFDALARMRNQPEVRTVRHYADHPAYIHALAEQVRQYWAQHGRPDFAAGDKLVLSFHGVPKRTLDLGDPYHDQCQQTGALLMAALGLSTTECRVTFQSRFGKAEWLQPYTAPTLREFGEAGVRRADVFCPGFTADCLETIEEIGMEVRDEFLAGGGKTFHRIPCLNGASAWIGALGEIVAENLQGWPVKAAQPEPVN.

Residues His-214 and Glu-295 each contribute to the Fe cation site.

Belongs to the ferrochelatase family.

The protein resides in the cytoplasm. It carries out the reaction heme b + 2 H(+) = protoporphyrin IX + Fe(2+). Its pathway is porphyrin-containing compound metabolism; protoheme biosynthesis; protoheme from protoporphyrin-IX: step 1/1. Catalyzes the ferrous insertion into protoporphyrin IX. The chain is Ferrochelatase from Burkholderia orbicola (strain MC0-3).